A 427-amino-acid polypeptide reads, in one-letter code: Inorganic pyrophosphatase 1 (427 aa).

Low complexity predominate over residues 36–52; it reads SSSSNTATTSTSSSNTS. Disordered regions lie at residues 36–63 and 77–118; these read SSSS…TSRP and SMDS…RSLH. 2 stretches are compositionally biased toward polar residues: residues 53-63 and 77-114; these read QKWATSRTSRP and SMDS…ANSE. 3 residues coordinate Mg(2+): Asp-259, Asp-264, and Asp-296.

The protein belongs to the PPase family. Requires Mg(2+) as cofactor. In terms of tissue distribution, expressed in coelomocytes, the intestine and in the nervous system including the nerve cords and sensory neurons.

The protein resides in the cytoplasm. It carries out the reaction diphosphate + H2O = 2 phosphate + H(+). In terms of biological role, catalyzes the hydrolysis of inorganic pyrophosphate (PPi) forming two phosphate ions. Plays a role in intestinal development and subsequent normal secretory, digestive and absorption functions. Required for larval development. The polypeptide is Inorganic pyrophosphatase 1 (Caenorhabditis elegans).